We begin with the raw amino-acid sequence, 475 residues long: Ribulose bisphosphate carboxylase large chain (475 aa).

The propeptide occupies 1–2 (MA). N-acetylproline is present on proline 3. Lysine 14 bears the N6,N6,N6-trimethyllysine mark. Residues asparagine 123 and threonine 173 each coordinate substrate. Lysine 175 (proton acceptor) is an active-site residue. Lysine 177 contacts substrate. Residues lysine 201, aspartate 203, and glutamate 204 each contribute to the Mg(2+) site. The residue at position 201 (lysine 201) is an N6-carboxylysine. Catalysis depends on histidine 294, which acts as the Proton acceptor. Substrate is bound by residues arginine 295, histidine 327, and serine 379.

Belongs to the RuBisCO large chain family. Type I subfamily. In terms of assembly, heterohexadecamer of 8 large chains and 8 small chains; disulfide-linked. The disulfide link is formed within the large subunit homodimers. Mg(2+) is required as a cofactor. The disulfide bond which can form in the large chain dimeric partners within the hexadecamer appears to be associated with oxidative stress and protein turnover.

Its subcellular location is the plastid. The protein localises to the chloroplast. It carries out the reaction 2 (2R)-3-phosphoglycerate + 2 H(+) = D-ribulose 1,5-bisphosphate + CO2 + H2O. The enzyme catalyses D-ribulose 1,5-bisphosphate + O2 = 2-phosphoglycolate + (2R)-3-phosphoglycerate + 2 H(+). In terms of biological role, ruBisCO catalyzes two reactions: the carboxylation of D-ribulose 1,5-bisphosphate, the primary event in carbon dioxide fixation, as well as the oxidative fragmentation of the pentose substrate in the photorespiration process. Both reactions occur simultaneously and in competition at the same active site. The polypeptide is Ribulose bisphosphate carboxylase large chain (Bryopsis maxima (Green alga)).